Reading from the N-terminus, the 179-residue chain is Large ribosomal subunit protein uL6 (179 aa).

Belongs to the universal ribosomal protein uL6 family. Part of the 50S ribosomal subunit.

Functionally, this protein binds to the 23S rRNA, and is important in its secondary structure. It is located near the subunit interface in the base of the L7/L12 stalk, and near the tRNA binding site of the peptidyltransferase center. In Mycolicibacterium vanbaalenii (strain DSM 7251 / JCM 13017 / BCRC 16820 / KCTC 9966 / NRRL B-24157 / PYR-1) (Mycobacterium vanbaalenii), this protein is Large ribosomal subunit protein uL6.